The sequence spans 1076 residues: Enhancer of mRNA-decapping protein 4-like protein pdc1 (1076 aa).

2 stretches are compositionally biased toward low complexity: residues 1-19 (MNEQ…LPNL) and 53-69 (SSLL…SNQS). Disordered regions lie at residues 1–82 (MNEQ…ASHS), 95–127 (GAKP…FNPV), and 139–204 (STGP…AEEQ). Positions 70-82 (PSNSGPKYYASHS) are enriched in polar residues. A compositionally biased stretch (polar residues) spans 153-173 (NDSQDTAFQSSRNMPSDTSVA). Positions 174–184 (SPDYSHSQSSS) are enriched in low complexity. A compositionally biased stretch (polar residues) spans 185 to 195 (PIANYQESGNS). 2 WD repeats span residues 292–334 (NSPN…STSE) and 402–441 (DTGI…PSTP). 2 disordered regions span residues 666-714 (RHST…SPSS) and 892-934 (TAPD…PAQG). The span at 669-688 (TASPSTVNSGFSTPRSQATG) shows a compositional bias: polar residues. 2 positions are modified to phosphoserine: Ser671 and Ser673. Thr674 bears the Phosphothreonine mark. Basic and acidic residues predominate over residues 695–706 (DKGERFETKDKS). Positions 789–1076 (MQVALKEEIA…ISEISVASSN (288 aa)) are interaction with dcp2. A Phosphoserine modification is found at Ser1075.

The protein belongs to the WD repeat EDC4 family. Interacts with dcp2; via C-terminus.

It is found in the cytoplasm. It localises to the P-body. Involved in P-body formation. Acts as a functional homolog of human EDC4, which plays a role in mRNA decapping in the process of mRNA degradation. Enhances the decapping activity of dcp2. Together with edc3, acts as a scaffolding protein sufficient for the phase transition of the components of the 5' to 3' mRNA degradation machinery to form P-bodies. Intermolecular interactions between the edc3 Sm domain and at least 10 helical leucine-rich motifs in dcp2 and pdc1 build the core of the interaction network of this spontaneous clustering process. This chain is Enhancer of mRNA-decapping protein 4-like protein pdc1, found in Schizosaccharomyces pombe (strain 972 / ATCC 24843) (Fission yeast).